The following is a 220-amino-acid chain: Transmembrane emp24 domain-containing protein 1 (220 aa).

Residues 1-19 (MAWSSSFLFIVLPLAAAVA) form the signal peptide. The Extracellular portion of the chain corresponds to 20–187 (VQPQDTELTF…LQDSNLERVN (168 aa)). The GOLD domain occupies 36–118 (QECFYQTTLY…EKLVFFELIF (83 aa)). Residues 138–164 (ELLDIKLEDIKESIESVKSRLERSIQM) adopt a coiled-coil conformation. A helical transmembrane segment spans residues 188–208 (FWSAINVGVLVTVAFLQVYML). The Cytoplasmic portion of the chain corresponds to 209 to 220 (KSLFDDKRKIRT). Positions 211-212 (LF) match the COPII vesicle coat-binding motif. Positions 211-220 (LFDDKRKIRT) match the COPI vesicle coat-binding motif.

This sequence belongs to the EMP24/GP25L family. In terms of assembly, homodimer in endoplasmic reticulum, endoplasmic reticulum-Golgi intermediate compartment and cis-Golgi network. Interacts with IL1RL1. Interacts with RNF26; this interaction is important to modulate innate immune signaling through the cGAS-STING pathway.

The protein resides in the cell membrane. The protein localises to the endoplasmic reticulum membrane. Its subcellular location is the golgi apparatus. It is found in the cis-Golgi network membrane. It localises to the endoplasmic reticulum-Golgi intermediate compartment membrane. Potential role in vesicular protein trafficking, mainly in the early secretory pathway. May act as a cargo receptor at the lumenal side for incorporation of secretory cargo molecules into transport vesicles and may be involved in vesicle coat formation at the cytoplasmic side. Plays a positive role in IL-33-mediated IL-8 and IL-6 production by interacting with interleukin-33 receptor IL1RL1. Plays also a role in the modulation of innate immune signaling through the cGAS-STING pathway by interacting with RNF26. The polypeptide is Transmembrane emp24 domain-containing protein 1 (tmed1) (Xenopus tropicalis (Western clawed frog)).